The following is a 202-amino-acid chain: Imidazoleglycerol-phosphate dehydratase (202 aa).

It belongs to the imidazoleglycerol-phosphate dehydratase family.

It localises to the cytoplasm. The catalysed reaction is D-erythro-1-(imidazol-4-yl)glycerol 3-phosphate = 3-(imidazol-4-yl)-2-oxopropyl phosphate + H2O. It functions in the pathway amino-acid biosynthesis; L-histidine biosynthesis; L-histidine from 5-phospho-alpha-D-ribose 1-diphosphate: step 6/9. The chain is Imidazoleglycerol-phosphate dehydratase from Brucella anthropi (strain ATCC 49188 / DSM 6882 / CCUG 24695 / JCM 21032 / LMG 3331 / NBRC 15819 / NCTC 12168 / Alc 37) (Ochrobactrum anthropi).